The following is a 537-amino-acid chain: MTDIGTLNFTWSQAIIGGFVAAGITDAVISPGSRSTPLALAMLRQAGLRCHIAIDERSAAFFGLGLAKSSHCPVLLLATSGTAPANWLPAVIEASQSGIPLILISADRPPELQDCGANQTVSQPGLFGSHTRASYTLGTPEPGFNPGYLHRVARQACEQASWPHPGPVHINQPFREPMLPSEPVLSGEMPEKISISHPDLQPDLNALGDLARRISGRPGIIVCGEMPSRDGQNEALVALATRLRSPIFAEPLSGLRFGPHDRSHLCVRYNDWLGKTDLVSQYRPEWVIRFGAYPVTRNLQKLVSEITETHALVDPWPRWIDPARRLTHLLRSEPAAICKALLDLSLVPFSETWLSALAKFEGNAEADEQRNHIHVLLEEVPDDTDLFVGNSLAIRQMDTHSGSADKTLRIYANRGASGIDGNISTAAGIAASRGRAVALIGDLTCQHDLGGLALAQGQNIVIIVVNNGGGGIFDHLPQRDLPEFTQGWRTPQNVNFEHAAMAFGLGYAATHSDDDLRPALRHAFAAGGPHLIELRQC.

The protein belongs to the TPP enzyme family. MenD subfamily. As to quaternary structure, homodimer. The cofactor is Mg(2+). Requires Mn(2+) as cofactor. It depends on thiamine diphosphate as a cofactor.

It catalyses the reaction isochorismate + 2-oxoglutarate + H(+) = 5-enolpyruvoyl-6-hydroxy-2-succinyl-cyclohex-3-ene-1-carboxylate + CO2. The protein operates within quinol/quinone metabolism; 1,4-dihydroxy-2-naphthoate biosynthesis; 1,4-dihydroxy-2-naphthoate from chorismate: step 2/7. It functions in the pathway quinol/quinone metabolism; menaquinone biosynthesis. In terms of biological role, catalyzes the thiamine diphosphate-dependent decarboxylation of 2-oxoglutarate and the subsequent addition of the resulting succinic semialdehyde-thiamine pyrophosphate anion to isochorismate to yield 2-succinyl-5-enolpyruvyl-6-hydroxy-3-cyclohexene-1-carboxylate (SEPHCHC). This chain is 2-succinyl-5-enolpyruvyl-6-hydroxy-3-cyclohexene-1-carboxylate synthase, found in Dechloromonas aromatica (strain RCB).